Here is a 200-residue protein sequence, read N- to C-terminus: uncharacterized protein (200 aa).

Positions 1 to 19 (MNAMFHSLFALSFVSLVAS) are cleaved as a signal peptide. Residues 148–168 (FMVIVSLAAFCISVLAGLALQ) form a helical membrane-spanning segment.

It localises to the membrane. This is an uncharacterized protein from Caenorhabditis elegans.